The primary structure comprises 241 residues: Pre-rRNA-processing protein pno1 (241 aa).

The interval 48-71 (APAKTSAEKKRGAKPQMRRVPIPP) is disordered. Position 52 is a phosphothreonine (T52). The 53-residue stretch at 162 to 214 (GDHLSRAIGRIAGQGGKTKFAIENASRTRIVLADSKIHILGGFTNIRIAKDAV) folds into the KH domain.

Belongs to the PNO1 family. As to quaternary structure, component of the small ribosomal subunit, ribosomal RNA processing complex (SSU RRP complex).

Its subcellular location is the cytoplasm. The protein resides in the nucleus. It localises to the nucleolus. Functionally, required for small ribosomal subunit (SSU) synthesis. Has a role in the processing of early nucleolar and late cytoplasmic pre-RNA species. The sequence is that of Pre-rRNA-processing protein pno1 (rbp28) from Schizosaccharomyces pombe (strain 972 / ATCC 24843) (Fission yeast).